The chain runs to 314 residues: MTNVIIEKISAKEVFKGAKIKVMITTMTNISIGYDIIEVNNPEEAIADVENVIAPELIGYPATDIDFIDSLICETSVNNPTVAMGISISVARAASNSLDIPLFKFLGGALTTELPIVASGILVDKDKNELIPIVMADSIEDIVNLYLKLTDVLSHDYSIVNIDGAYTCKDIFNEIPKIRNLIDEIKEDEDLDILLGLSSKKETVKDKDLSQIDYLEVEEPVEFDGFLCTDSIYEESDFVKVFPYEMGTITEMYYYINYIMDKGLYPVIFGNNSSFAHIAVSFKVPFLRPKLSSNVLNEVWNIERTIMNPNIRRF.

This is an uncharacterized protein from Methanocaldococcus jannaschii (strain ATCC 43067 / DSM 2661 / JAL-1 / JCM 10045 / NBRC 100440) (Methanococcus jannaschii).